A 147-amino-acid polypeptide reads, in one-letter code: Putative pre-16S rRNA nuclease (147 aa).

It belongs to the YqgF nuclease family.

The protein resides in the cytoplasm. Functionally, could be a nuclease involved in processing of the 5'-end of pre-16S rRNA. The protein is Putative pre-16S rRNA nuclease of Latilactobacillus sakei subsp. sakei (strain 23K) (Lactobacillus sakei subsp. sakei).